We begin with the raw amino-acid sequence, 204 residues long: Probable nicotinate-nucleotide adenylyltransferase (204 aa).

This sequence belongs to the NadD family.

It carries out the reaction nicotinate beta-D-ribonucleotide + ATP + H(+) = deamido-NAD(+) + diphosphate. It functions in the pathway cofactor biosynthesis; NAD(+) biosynthesis; deamido-NAD(+) from nicotinate D-ribonucleotide: step 1/1. Functionally, catalyzes the reversible adenylation of nicotinate mononucleotide (NaMN) to nicotinic acid adenine dinucleotide (NaAD). The sequence is that of Probable nicotinate-nucleotide adenylyltransferase from Methylacidiphilum infernorum (isolate V4) (Methylokorus infernorum (strain V4)).